The primary structure comprises 216 residues: Glycerol-3-phosphate acyltransferase 3 (216 aa).

A run of 5 helical transmembrane segments spans residues 6 to 26 (LLLV…YLVS), 58 to 78 (LVAA…GLVI), 92 to 112 (ILFA…WPVF), 125 to 145 (FGGM…VLII), and 158 to 178 (ITGV…SGFP).

Belongs to the PlsY family. As to quaternary structure, probably interacts with PlsX.

It localises to the cell membrane. It catalyses the reaction an acyl phosphate + sn-glycerol 3-phosphate = a 1-acyl-sn-glycero-3-phosphate + phosphate. It participates in lipid metabolism; phospholipid metabolism. Catalyzes the transfer of an acyl group from acyl-phosphate (acyl-PO(4)) to glycerol-3-phosphate (G3P) to form lysophosphatidic acid (LPA). This enzyme utilizes acyl-phosphate as fatty acyl donor, but not acyl-CoA or acyl-ACP. This is Glycerol-3-phosphate acyltransferase 3 from Dehalococcoides mccartyi (strain ATCC BAA-2266 / KCTC 15142 / 195) (Dehalococcoides ethenogenes (strain 195)).